We begin with the raw amino-acid sequence, 481 residues long: UDP-glucose 6-dehydrogenase 1 (481 aa).

Residues Gly8–Gly13, Asp33, Arg38, Val86–Thr90, Ser127–Thr128, and Glu161 contribute to the NAD(+) site. Residues Glu157 to Glu161, Lys216 to Leu223, and Arg256 to Gly269 each bind substrate. Residue Cys272 is the Nucleophile of the active site. Position 272–275 (Cys272–Lys275) interacts with NAD(+). Phe334 to Lys335 lines the substrate pocket. Residue Arg342 participates in NAD(+) binding. Position 448 (Arg448) interacts with substrate.

Belongs to the UDP-glucose/GDP-mannose dehydrogenase family.

The enzyme catalyses UDP-alpha-D-glucose + 2 NAD(+) + H2O = UDP-alpha-D-glucuronate + 2 NADH + 3 H(+). Its pathway is nucleotide-sugar biosynthesis; UDP-alpha-D-glucuronate biosynthesis; UDP-alpha-D-glucuronate from UDP-alpha-D-glucose: step 1/1. Inhibited by UDP-xylose. Functionally, involved in the biosynthesis of UDP-glucuronic acid (UDP-GlcA), providing nucleotide sugars for cell-wall polymers. This chain is UDP-glucose 6-dehydrogenase 1 (UGD1), found in Arabidopsis thaliana (Mouse-ear cress).